A 131-amino-acid chain; its full sequence is Putative pre-16S rRNA nuclease (131 aa).

Belongs to the YqgF nuclease family.

Its subcellular location is the cytoplasm. In terms of biological role, could be a nuclease involved in processing of the 5'-end of pre-16S rRNA. The polypeptide is Putative pre-16S rRNA nuclease (Bordetella petrii (strain ATCC BAA-461 / DSM 12804 / CCUG 43448)).